The primary structure comprises 216 residues: Thiamine-phosphate synthase (216 aa).

4-amino-2-methyl-5-(diphosphooxymethyl)pyrimidine-binding positions include 41 to 45 (QLREK) and Asp77. Mg(2+) contacts are provided by Asp78 and Asp97. Ser116 serves as a coordination point for 4-amino-2-methyl-5-(diphosphooxymethyl)pyrimidine. 143–145 (TTS) provides a ligand contact to 2-[(2R,5Z)-2-carboxy-4-methylthiazol-5(2H)-ylidene]ethyl phosphate. Lys146 is a binding site for 4-amino-2-methyl-5-(diphosphooxymethyl)pyrimidine. 2-[(2R,5Z)-2-carboxy-4-methylthiazol-5(2H)-ylidene]ethyl phosphate-binding positions include Gly174 and 194 to 195 (IS).

This sequence belongs to the thiamine-phosphate synthase family. It depends on Mg(2+) as a cofactor.

It catalyses the reaction 2-[(2R,5Z)-2-carboxy-4-methylthiazol-5(2H)-ylidene]ethyl phosphate + 4-amino-2-methyl-5-(diphosphooxymethyl)pyrimidine + 2 H(+) = thiamine phosphate + CO2 + diphosphate. The enzyme catalyses 2-(2-carboxy-4-methylthiazol-5-yl)ethyl phosphate + 4-amino-2-methyl-5-(diphosphooxymethyl)pyrimidine + 2 H(+) = thiamine phosphate + CO2 + diphosphate. It carries out the reaction 4-methyl-5-(2-phosphooxyethyl)-thiazole + 4-amino-2-methyl-5-(diphosphooxymethyl)pyrimidine + H(+) = thiamine phosphate + diphosphate. It participates in cofactor biosynthesis; thiamine diphosphate biosynthesis; thiamine phosphate from 4-amino-2-methyl-5-diphosphomethylpyrimidine and 4-methyl-5-(2-phosphoethyl)-thiazole: step 1/1. In terms of biological role, condenses 4-methyl-5-(beta-hydroxyethyl)thiazole monophosphate (THZ-P) and 2-methyl-4-amino-5-hydroxymethyl pyrimidine pyrophosphate (HMP-PP) to form thiamine monophosphate (TMP). The polypeptide is Thiamine-phosphate synthase (Pediococcus pentosaceus (strain ATCC 25745 / CCUG 21536 / LMG 10740 / 183-1w)).